We begin with the raw amino-acid sequence, 581 residues long: Kelch-like protein 38 (581 aa).

The BTB domain occupies 34–101 (TDVSICAGAR…VYTGEAHIAT (68 aa)). Residues 136-237 (CLGMIRLSEI…HPAFFHHFIA (102 aa)) form the BACK domain. Kelch repeat units follow at residues 285–332 (FLIL…TLHR), 334–383 (IYVL…AHKN), 384–431 (FIFS…VKDQ), 433–479 (LYLF…VLGE), 480–521 (RIVI…VMGN), and 523–573 (LYVT…TLQC).

The sequence is that of Kelch-like protein 38 (KLHL38) from Homo sapiens (Human).